Reading from the N-terminus, the 177-residue chain is ADP-ribose 1''-phosphate phosphatase (177 aa).

The 177-residue stretch at 1-177 (MSNITYVKGN…GDMSFTVYQL (177 aa)) folds into the Macro domain. Substrate contacts are provided by residues 9 to 11 (GNI), 24 to 26 (SCN), 31 to 36 (WGGGIA), and 147 to 153 (INSGIFG).

This sequence belongs to the POA1 family.

The enzyme catalyses ADP-alpha-D-ribose 1''-phosphate + H2O = ADP-D-ribose + phosphate. Highly specific phosphatase involved in the metabolism of ADP-ribose 1''-phosphate (Appr1p) which is produced as a consequence of tRNA splicing. Removes ADP-ribose from glutamate residues in proteins bearing a single ADP-ribose moiety. Inactive towards proteins bearing poly-ADP-ribose. The sequence is that of ADP-ribose 1''-phosphate phosphatase (POA1) from Saccharomyces cerevisiae (strain YJM789) (Baker's yeast).